The primary structure comprises 52 residues: Large ribosomal subunit protein bL33 (52 aa).

Belongs to the bacterial ribosomal protein bL33 family.

The sequence is that of Large ribosomal subunit protein bL33 from Campylobacter jejuni subsp. doylei (strain ATCC BAA-1458 / RM4099 / 269.97).